We begin with the raw amino-acid sequence, 199 residues long: CASP-like protein 4B1 (199 aa).

The interval 1–32 (MAMVASPDDIVKSPLPPPPPPPPPPLPPAHKD) is disordered. Over 1-53 (MAMVASPDDIVKSPLPPPPPPPPPPLPPAHKDKAAYNPYSGCPAHGGDDGLDG) the chain is Cytoplasmic. Positions 14-28 (PLPPPPPPPPPPLPP) are enriched in pro residues. Residues 54-74 (IVLVLRAAAALLALVAMALVA) traverse the membrane as a helical segment. The Extracellular segment spans residues 75–91 (SCRHGDWMEFTRYQEYR). The chain crosses the membrane as a helical span at residues 92 to 112 (YLLGVAVVASLYSALQAARTF). At 113-127 (RRMRAGTAYAATFLD) the chain is on the cytoplasmic side. The chain crosses the membrane as a helical span at residues 128–148 (FAGDQAVGYLLITASSAALPI). Residues 149–163 (TIRMRSAVVNTFTDV) lie on the Extracellular side of the membrane. A helical transmembrane segment spans residues 164-184 (VAASISFAFLAFAALAFSALI). Residues 185 to 199 (AGFRLSSSSSSAYNY) are Cytoplasmic-facing.

The protein belongs to the Casparian strip membrane proteins (CASP) family. Homodimer and heterodimers.

The protein localises to the cell membrane. The protein is CASP-like protein 4B1 of Oryza sativa subsp. japonica (Rice).